The primary structure comprises 75 residues: MKINKLTLNERKNDILSYFGEINAPCRTSEVAEHLGVSAYQARHYLQCLEKEGKIKRSPVRRGASTLWEISSIPP.

In terms of biological role, may have a possible regulatory function on the expression of the other daa genes. This is F1845 fimbrial adhesin operon regulatory protein DaaF (daaF) from Escherichia coli.